The primary structure comprises 145 residues: Acidic phospholipase A2 (145 aa).

Positions 1–19 (MNPAHLLILSAVCVSLLGA) are cleaved as a signal peptide. The propeptide occupies 20-27 (ANVPPQHL). Cystine bridges form between Cys-38–Cys-97, Cys-52–Cys-144, Cys-54–Cys-70, Cys-69–Cys-125, Cys-76–Cys-118, Cys-86–Cys-111, and Cys-104–Cys-116. Ca(2+) is bound by residues Tyr-53, Gly-55, and Gly-57. The active site involves His-73. Asp-74 lines the Ca(2+) pocket. Asp-119 is a catalytic residue.

The protein belongs to the phospholipase A2 family. Group I subfamily. D49 sub-subfamily. It depends on Ca(2+) as a cofactor. In terms of tissue distribution, expressed by the venom gland.

It is found in the secreted. It catalyses the reaction a 1,2-diacyl-sn-glycero-3-phosphocholine + H2O = a 1-acyl-sn-glycero-3-phosphocholine + a fatty acid + H(+). Its function is as follows. PLA2 catalyzes the calcium-dependent hydrolysis of the 2-acyl groups in 3-sn-phosphoglycerides. The chain is Acidic phospholipase A2 from Bungarus multicinctus (Many-banded krait).